The primary structure comprises 60 residues: Metallothionein A (60 aa).

Positions 1-28 are beta; the sequence is MDPCDCSKSGTCNCGGSCTCTNCSCKSC. Residues Cys-4, Cys-6, Cys-12, Cys-14, Cys-18, Cys-20, Cys-23, Cys-25, Cys-28, Cys-32, Cys-33, Cys-35, Cys-36, Cys-40, Cys-43, Cys-47, Cys-49, Cys-54, Cys-58, and Cys-59 each contribute to the a divalent metal cation site. Residues 29–60 are alpha; the sequence is KKSCCPCCPSGCTKCASGCVCKGKTCDTSCCQ.

The protein belongs to the metallothionein superfamily. Type 1 family.

Metallothioneins have a high content of cysteine residues that bind various heavy metals. The polypeptide is Metallothionein A (mta) (Chionodraco hamatus (Antarctic teleost icefish)).